The sequence spans 300 residues: uncharacterized protein (300 aa).

The Charge relay system role is filled by Ser-49. The active-site Proton donor is Tyr-137. Lys-165 functions as the Schiff-base intermediate with substrate in the catalytic mechanism.

This sequence belongs to the DapA family. As to quaternary structure, homotetramer.

The protein resides in the cytoplasm. Its function is as follows. Upon expression in E.coli complements a dapA deletion mutation, but this may not be its physiological function. This is an uncharacterized protein from Rhizobium meliloti (Ensifer meliloti).